The primary structure comprises 209 residues: MRFSLLALLGTIVATSVSALKEPPTQLQVGVKKRIPASECTRKSHSGDELSMHYTGTLFDTGEKFDSSLDRNEPFVFTLGAGQVIQGWDQGLLGMCVGEKRRLVIPPHLGYGERGAGGVIPGGATLVFEVELLEIKPGKYNQKAMPVQQQQESPISFTSPSFLVSTGIIVALFLIVFKMAKKQDIAEANEKAAAATAEASTEKKEEKKE.

An N-terminal signal peptide occupies residues 1 to 19 (MRFSLLALLGTIVATSVSA). A PPIase FKBP-type domain is found at 47 to 136 (GDELSMHYTG…VFEVELLEIK (90 aa)). A helical transmembrane segment spans residues 157-177 (FTSPSFLVSTGIIVALFLIVF). Positions 178-207 (KMAKKQDIAEANEKAAAATAEASTEKKEEK) form a coiled coil. The disordered stretch occupies residues 190–209 (EKAAAATAEASTEKKEEKKE). Positions 200 to 209 (STEKKEEKKE) are enriched in basic and acidic residues.

This sequence belongs to the FKBP-type PPIase family. FKBP2 subfamily.

The protein localises to the membrane. It catalyses the reaction [protein]-peptidylproline (omega=180) = [protein]-peptidylproline (omega=0). Inhibited by both FK506 and rapamycin. Functionally, PPIases accelerate the folding of proteins. It catalyzes the cis-trans isomerization of proline imidic peptide bonds in oligopeptides. This chain is FK506-binding protein 2B (FKBP3), found in Rhizopus delemar (strain RA 99-880 / ATCC MYA-4621 / FGSC 9543 / NRRL 43880) (Mucormycosis agent).